Here is a 249-residue protein sequence, read N- to C-terminus: Probable transcriptional regulatory protein ZMO0153 (249 aa).

It belongs to the TACO1 family.

The protein resides in the cytoplasm. In Zymomonas mobilis subsp. mobilis (strain ATCC 31821 / ZM4 / CP4), this protein is Probable transcriptional regulatory protein ZMO0153.